Here is a 96-residue protein sequence, read N- to C-terminus: Small ribosomal subunit protein bS6 (96 aa).

The protein belongs to the bacterial ribosomal protein bS6 family.

Functionally, binds together with bS18 to 16S ribosomal RNA. This Beutenbergia cavernae (strain ATCC BAA-8 / DSM 12333 / CCUG 43141 / JCM 11478 / NBRC 16432 / NCIMB 13614 / HKI 0122) protein is Small ribosomal subunit protein bS6.